Reading from the N-terminus, the 611-residue chain is Chaperone protein DnaK (611 aa).

Threonine 173 carries the phosphothreonine; by autocatalysis modification. A compositionally biased stretch (low complexity) spans 577–592 (QAAAGQAEGAEGAQDA). A disordered region spans residues 577 to 598 (QAAAGQAEGAEGAQDAGAKKDN).

It belongs to the heat shock protein 70 family.

Its function is as follows. Acts as a chaperone. This Bacillus anthracis (strain A0248) protein is Chaperone protein DnaK.